Consider the following 488-residue polypeptide: Endoglucanase A (488 aa).

Substrate contacts are provided by residues H59, 63–64 (WY), Y90, and H125. E163 (proton donor) is an active-site residue. Substrate is bound at residue Y226. E252 serves as the catalytic Nucleophile. Substrate-binding positions include 258 to 259 (AT), W286, and 291 to 293 (KDE). 2 disordered regions span residues 326 to 362 (ESASIPPSDPTPPSDPDPGEPDPTPPSDPGEYPAWDP) and 388 to 451 (EPGA…WDPT). Pro residues-rich tracts occupy residues 332 to 353 (PSDPTPPSDPDPGEPDPTPPSD) and 405 to 416 (PSEPSDPPPPSE). Residues 417–433 (PEPDPGEPDPGEPDPGE) show a composition bias toward acidic residues.

It belongs to the glycosyl hydrolase 5 (cellulase A) family.

It carries out the reaction Endohydrolysis of (1-&gt;4)-beta-D-glucosidic linkages in cellulose, lichenin and cereal beta-D-glucans.. This chain is Endoglucanase A (celA), found in Evansella cellulosilytica (strain ATCC 21833 / DSM 2522 / FERM P-1141 / JCM 9156 / N-4) (Bacillus cellulosilyticus).